We begin with the raw amino-acid sequence, 309 residues long: uncharacterized protein (309 aa).

Residues 272–291 (PSLDAPSETVEAFPEPQKNL) form a disordered region.

This is an uncharacterized protein from Bacillus subtilis (strain 168).